The primary structure comprises 331 residues: Phosphate acyltransferase (331 aa).

It belongs to the PlsX family. In terms of assembly, homodimer. Probably interacts with PlsY.

Its subcellular location is the cytoplasm. The enzyme catalyses a fatty acyl-[ACP] + phosphate = an acyl phosphate + holo-[ACP]. The protein operates within lipid metabolism; phospholipid metabolism. Catalyzes the reversible formation of acyl-phosphate (acyl-PO(4)) from acyl-[acyl-carrier-protein] (acyl-ACP). This enzyme utilizes acyl-ACP as fatty acyl donor, but not acyl-CoA. The polypeptide is Phosphate acyltransferase (Clostridium acetobutylicum (strain ATCC 824 / DSM 792 / JCM 1419 / IAM 19013 / LMG 5710 / NBRC 13948 / NRRL B-527 / VKM B-1787 / 2291 / W)).